A 470-amino-acid chain; its full sequence is ATP synthase subunit beta (470 aa).

156 to 163 (GGAGVGKT) contributes to the ATP binding site.

The protein belongs to the ATPase alpha/beta chains family. F-type ATPases have 2 components, CF(1) - the catalytic core - and CF(0) - the membrane proton channel. CF(1) has five subunits: alpha(3), beta(3), gamma(1), delta(1), epsilon(1). CF(0) has three main subunits: a(1), b(2) and c(9-12). The alpha and beta chains form an alternating ring which encloses part of the gamma chain. CF(1) is attached to CF(0) by a central stalk formed by the gamma and epsilon chains, while a peripheral stalk is formed by the delta and b chains.

Its subcellular location is the cell inner membrane. The catalysed reaction is ATP + H2O + 4 H(+)(in) = ADP + phosphate + 5 H(+)(out). In terms of biological role, produces ATP from ADP in the presence of a proton gradient across the membrane. The catalytic sites are hosted primarily by the beta subunits. The sequence is that of ATP synthase subunit beta from Nitratidesulfovibrio vulgaris (strain ATCC 29579 / DSM 644 / CCUG 34227 / NCIMB 8303 / VKM B-1760 / Hildenborough) (Desulfovibrio vulgaris).